A 383-amino-acid polypeptide reads, in one-letter code: D-alanine--D-alanine ligase (383 aa).

Positions 169–373 (KALLRAAGLP…YPQLVDRLVR (205 aa)) constitute an ATP-grasp domain. Residue 196–251 (QERLGLPVFVKPARGGSSIGISRVEAWADLDTAIKAARASDPKVLVESAIVGREIE) coordinates ATP. Residues D327, E340, and N342 each contribute to the Mg(2+) site.

The protein belongs to the D-alanine--D-alanine ligase family. The cofactor is Mg(2+). Mn(2+) is required as a cofactor.

The protein resides in the cytoplasm. It catalyses the reaction 2 D-alanine + ATP = D-alanyl-D-alanine + ADP + phosphate + H(+). It functions in the pathway cell wall biogenesis; peptidoglycan biosynthesis. Cell wall formation. In Frankia casuarinae (strain DSM 45818 / CECT 9043 / HFP020203 / CcI3), this protein is D-alanine--D-alanine ligase.